Consider the following 496-residue polypeptide: 7,8-epoxymelianol synthase CYP88A154 (496 aa).

The helical transmembrane segment at 11-31 threads the bilayer; the sequence is FNFLWLILAIFVGTYVVLFGF. Residue C444 coordinates heme.

The protein belongs to the cytochrome P450 family. It depends on heme as a cofactor.

It localises to the membrane. The enzyme catalyses melianol + reduced [NADPH--hemoprotein reductase] + O2 = 7,8-epoxymelianol + oxidized [NADPH--hemoprotein reductase] + H2O + H(+). The protein operates within secondary metabolite biosynthesis; terpenoid biosynthesis. In terms of biological role, monooxygenase involved in the biosynthesis of glabretanes, limonoids and quassinoids triterpene natural products such as ailanthone, chaparrinone, glaucarubinone and amarolide, allelopathic degraded triterpene lactones inhibiting the growth of other plants, and possessing antimalarial, antifeedant, insecticidal, anti-inflammatory and anticancer activities. Catalyzes the epoxidation of melianol to produce 7,8-epoxymelianol. The sequence is that of 7,8-epoxymelianol synthase CYP88A154 from Ailanthus altissima (Tree-of-heaven).